Reading from the N-terminus, the 174-residue chain is MGKITFYEDRGFQGRCYECSSDCPNLQTYFSRCNSIRVDSGCWMLYERPNYQGHQYFLRRGDYPDYQQWMGFSDSIRSCRLIPHTGSHRMRLYEKEDHKGVMMELSEDCSCIQDRFHLSEVRSLHVLEGCWVLYEMPNYRGRQYLLRPQEYRRYHDWGAVDAKAGSLRRVVDLY.

2 Beta/gamma crystallin 'Greek key' domains span residues 2–40 (GKITFYEDRGFQGRCYECSSDCPNLQTYFSRCNSIRVDS) and 41–83 (GCWM…RLIP). The residue at position 23 (Cys-23) is an S-methylcysteine. Residues 84-87 (HTGS) are connecting peptide. Beta/gamma crystallin 'Greek key' domains are found at residues 88–128 (HRMR…HVLE) and 129–171 (GCWV…RRVV).

The protein belongs to the beta/gamma-crystallin family.

Crystallins are the dominant structural components of the vertebrate eye lens. The polypeptide is Gamma-crystallin C (Crygc) (Rattus norvegicus (Rat)).